The sequence spans 894 residues: Protein NLP9 (894 aa).

Residues Q517–G603 form the RWP-RK domain. A coiled-coil region spans residues R578–Q598. A disordered region spans residues N732–L763. The segment covering S747–L763 has biased composition (low complexity). Residues T792 to I875 form the PB1 domain.

Its subcellular location is the nucleus. Its function is as follows. Probable transcription factor. The protein is Protein NLP9 (NLP9) of Arabidopsis thaliana (Mouse-ear cress).